Reading from the N-terminus, the 414-residue chain is Protein RecA (414 aa).

An ATP-binding site is contributed by 78-85 (GPESSGKT). Residues 361 to 384 (QEKAVEALKKEEGSKEDALTGNKD) are compositionally biased toward basic and acidic residues. The tract at residues 361-414 (QEKAVEALKKEEGSKEDALTGNKDETDDSAQKNSAASKAKRAEVVGLPADDSLF) is disordered.

It belongs to the RecA family.

The protein localises to the cytoplasm. Its function is as follows. Can catalyze the hydrolysis of ATP in the presence of single-stranded DNA, the ATP-dependent uptake of single-stranded DNA by duplex DNA, and the ATP-dependent hybridization of homologous single-stranded DNAs. It interacts with LexA causing its activation and leading to its autocatalytic cleavage. The polypeptide is Protein RecA (Treponema denticola (strain ATCC 35405 / DSM 14222 / CIP 103919 / JCM 8153 / KCTC 15104)).